Reading from the N-terminus, the 212-residue chain is Interleukin-6 (212 aa).

The signal sequence occupies residues 1–29; it reads MNSFSTSAFGPVAFSLGLLLVLPAAFPAP. 2 cysteine pairs are disulfide-bonded: Cys72–Cys78 and Cys101–Cys111. Asn73 is a glycosylation site (N-linked (GlcNAc...) asparagine). Asn172 is a glycosylation site (N-linked (GlcNAc...) asparagine).

It belongs to the IL-6 superfamily. As to quaternary structure, component of a hexamer of two molecules each of IL6, IL6R and IL6ST; first binds to IL6R to associate with the signaling subunit IL6ST. Interacts with IL6R (via the N-terminal ectodomain); this interaction may be affected by IL6R-binding with SORL1, hence decreasing IL6 cis signaling. Interacts with SORL1 (via the N-terminal ectodomain); this interaction leads to IL6 internalization and lysosomal degradation. May form a trimeric complex with the soluble SORL1 ectodomain and soluble IL6R receptor; this interaction might stabilize circulating IL6, hence promoting IL6 trans signaling.

It localises to the secreted. Its function is as follows. Cytokine with a wide variety of biological functions in immunity, tissue regeneration, and metabolism. Binds to IL6R, then the complex associates to the signaling subunit IL6ST/gp130 to trigger the intracellular IL6-signaling pathway. The interaction with the membrane-bound IL6R and IL6ST stimulates 'classic signaling', whereas the binding of IL6 and soluble IL6R to IL6ST stimulates 'trans-signaling'. Alternatively, 'cluster signaling' occurs when membrane-bound IL6:IL6R complexes on transmitter cells activate IL6ST receptors on neighboring receiver cells. Functionally, IL6 is a potent inducer of the acute phase response. Rapid production of IL6 contributes to host defense during infection and tissue injury, but excessive IL6 synthesis is involved in disease pathology. In the innate immune response, is synthesized by myeloid cells, such as macrophages and dendritic cells, upon recognition of pathogens through toll-like receptors (TLRs) at the site of infection or tissue injury. In the adaptive immune response, is required for the differentiation of B cells into immunoglobulin-secreting cells. Plays a major role in the differentiation of CD4(+) T cell subsets. Essential factor for the development of T follicular helper (Tfh) cells that are required for the induction of germinal-center formation. Required to drive naive CD4(+) T cells to the Th17 lineage. Also required for proliferation of myeloma cells and the survival of plasmablast cells. In terms of biological role, acts as an essential factor in bone homeostasis and on vessels directly or indirectly by induction of VEGF, resulting in increased angiogenesis activity and vascular permeability. Induces, through 'trans-signaling' and synergistically with IL1B and TNF, the production of VEGF. Involved in metabolic controls, is discharged into the bloodstream after muscle contraction increasing lipolysis and improving insulin resistance. 'Trans-signaling' in central nervous system also regulates energy and glucose homeostasis. Mediates, through GLP-1, crosstalk between insulin-sensitive tissues, intestinal L cells and pancreatic islets to adapt to changes in insulin demand. Also acts as a myokine. Plays a protective role during liver injury, being required for maintenance of tissue regeneration. Also has a pivotal role in iron metabolism by regulating HAMP/hepcidin expression upon inflammation or bacterial infection. Through activation of IL6ST-YAP-NOTCH pathway, induces inflammation-induced epithelial regeneration. This is Interleukin-6 (IL6) from Cercocebus atys (Sooty mangabey).